The sequence spans 266 residues: MSEQEVTFPTMRFHKSSGLNSQVRLEGTQRSRKAGLRVCSVPWQLIVIALGILCSLRLVIVAVFVTKFFQYSQHKQEINETLNHRHNCSNMQRDFNLKEEMLTNKSIDCRPSYELLEYIKREQERWDSETKSVSDSSRDTGRGVKYWFCYGTKCYYFIMNKTTWSGCKANCQHYSVPIVKIEDEDELKFLQRHVILESYWIGLSYDKKKKEWAWIHNGQSKLDMKIKKMNFTSRGCVFLSKARIEDTDCNTPYYCICGKKLDKFPD.

The Cytoplasmic segment spans residues 1-44 (MSEQEVTFPTMRFHKSSGLNSQVRLEGTQRSRKAGLRVCSVPWQ). The helical; Signal-anchor for type II membrane protein transmembrane segment at 45–66 (LIVIALGILCSLRLVIVAVFVT) threads the bilayer. Over 67–266 (KFFQYSQHKQ…CGKKLDKFPD (200 aa)) the chain is Extracellular. N87 and N104 each carry an N-linked (GlcNAc...) asparagine glycan. Positions 143 to 261 (GVKYWFCYGT…PYYCICGKKL (119 aa)) constitute a C-type lectin domain. Disulfide bonds link C149/C154, C167/C255, C171/C257, and C236/C249.

In terms of assembly, homodimer; disulfide-linked. Interacts with the adapter protein TYROBP/DAP12; the interaction leads to natural killer cell activation.

The protein resides in the cell membrane. Functionally, receptor on natural killer (NK) cells for class I MHC. The protein is Killer cell lectin-like receptor 8 (Klra8) of Mus musculus (Mouse).